The following is a 161-amino-acid chain: uncharacterized protein (161 aa).

The protein belongs to the SixA phosphatase family.

This is an uncharacterized protein from Mycobacterium leprae (strain TN).